Reading from the N-terminus, the 78-residue chain is Surfactant-associated protein 2 (78 aa).

A signal peptide spans 1–19; it reads MGSGLPLVLLLTLLGSSHG. N-linked (GlcNAc...) asparagine glycosylation is present at Asn37.

N-glycosylated. As to expression, predominantly expressed in lung, where it is detected in type II pneumocytes in the alveolus, and in nonciliated epithelium in bronchioli (at protein level). Also detected at lower levels in cervix, esophagus, stomach, testis and kidney.

It localises to the secreted. It is found in the cytoplasmic vesicle. The protein localises to the secretory vesicle. The protein resides in the golgi apparatus. Functionally, putative surfactant protein. This chain is Surfactant-associated protein 2 (SFTA2), found in Homo sapiens (Human).